We begin with the raw amino-acid sequence, 1490 residues long: MTTKRKLIGRLVPCRCFRGEEEIISVLDYSHCSLQQVPKEVFNFERTLEELYLDANQIEELPKQLFNCQALRKLSIPDNDLSSLPTSIASLVNLKELDISKNGVQEFPENIKCCKCLTIIEASVNPISKLPDGFTQLLNLTQLYLNDAFLEFLPANFGRLVKLRILELRENHLKTLPKSMHKLAQLERLDLGNNEFSELPEVLDQIQNLRELWMDNNALQVLPGSIGKLKMLVYLDMSKNRIETVDMDISGCEALEDLLLSSNMLQQLPDSIGLLKKLTTLKVDDNQLTMLPNTIGNLSLLEEFDCSCNELESLPPTIGYLHSLRTLAVDENFLPELPREIGSCKNVTVMSLRSNKLEFLPEEIGQMQRLRVLNLSDNRLKNLPFSFTKLKELAALWLSDNQSKALIPLQTEAHPETKQRVLTNYMFPQQPRGDEDFQSDSDSFNPTLWEEQRQQRMTVAFEFEDKKEDDESAGKVKALSCQAPWDRGQRGITLQPARLSGDCCTPWARCDQQIQDMPVPQSDPQLAWGCISGLQQERSMCAPLPVAAQSTTLPSLSGRQVEINLKRYPTPYPEDLKNMVKSVQNLVGKPSHGVRVENSNPTANTEQTVKEKFEHKWPVAPKEITVEDSFVHPANEMRIGELHPSLAETPLYPPKLVLLGKDKKESTDESEVDKTHCLNNSVSSGTYSDYSPSQASSASSNTRMKVGSLQATAKDAVHNSLWGNRIAPPFPQPLDAKPLLSQREAVPPGNIPQRPDRLPMSDAFPDNWTDGSHYDNTGFVSEEAAGENANNNPLLSSKARSVPAHGRRPLIRQERIVGVPLELEQSTHRHTPETEVPPSNPWQNWTRTPSPFEDRTAFPSKLETTPTTSPLPERKDHMKEPTETPGPFSPGVPWEYHDPTPNRSLGNVFSQIHCRPDSSKGVIAISKSTERLSPLMKDIKSNKFKKSQSIDEIDVGTYKVYNIPLENYASGSDHLGSHERPDKFLGPEHGMSSMSRSQSVPMLDDEMLMYGSSKGPPQQKASMTKKVYQFDQSFNPQGAVEVKAEKRIPPPFAHNSEYVQQPSKNIAKDLVSPRAYRGYPPMEQMFSFSQPSVNEDAMVNAQFASQGPRAGFLRRADSLASSTEMAMFRRVSEPHELPPGDRYGRATYRGGLEGQSSISMTDPQFLKRNGRYEDEHPSYQEVKAQAGSFPAKNLTQRRPLSARSYSTESYGASQTRPVSARPTMAALLEKIPSDYNLGNYGDKTSDNSDIKTRPTPVKGEESCGKMPADWRQQLLRHIEARRLDRTPSQQSNILDNGQEDVSPSGQWNPYPLGRRDVPPDTITKKAGSHIQTLMGSQSLQHRSREQQPYEGNINKVTIQQFQSPLPIQIPSSQATRGPQPGRCLIQTKGQRSMDGYPEQFCVRIEKNPGLGFSISGGISGQGNPFKPSDKGIFVTRVQPDGPASNLLQPGDKILQANGHSFVHMEHEKAVLLLKSFQNTVDLVIQRELTV.

17 LRR repeats span residues 23–44, 47–68, 70–91, 93–114, 116–137, 139–161, 162–183, 185–206, 208–229, 231–253, 254–275, 277–298, 300–321, 323–344, 346–367, 369–391, and 392–413; these read IISVLDYSHCSLQQVPKEVFNF, TLEELYLDANQIEELPKQLFNC, ALRKLSIPDNDLSSLPTSIASL, NLKELDISKNGVQEFPENIKCC, CLTIIEASVNPISKLPDGFTQL, NLTQLYLNDAFLEFLPANFGRLV, KLRILELRENHLKTLPKSMHKL, QLERLDLGNNEFSELPEVLDQI, NLRELWMDNNALQVLPGSIGKL, MLVYLDMSKNRIETVDMDISGCE, ALEDLLLSSNMLQQLPDSIGLL, KLTTLKVDDNQLTMLPNTIGNL, LLEEFDCSCNELESLPPTIGYL, SLRTLAVDENFLPELPREIGSC, NVTVMSLRSNKLEFLPEEIGQM, RLRVLNLSDNRLKNLPFSFTKLK, and ELAALWLSDNQSKALIPLQTEA. Residues serine 439, serine 441, and serine 443 each carry the phosphoserine modification. The segment covering 663 to 676 has biased composition (basic and acidic residues); the sequence is KKESTDESEVDKTH. Disordered regions lie at residues 663-704, 785-807, and 822-899; these read KKES…NTRM, AGENANNNPLLSSKARSVPAHGR, and ELEQ…YHDP. Polar residues predominate over residues 677–686; that stretch reads CLNNSVSSGT. Over residues 687–700 the composition is skewed to low complexity; it reads YSDYSPSQASSASS. Threonine 831 carries the phosphothreonine modification. Serine 850 is modified (phosphoserine). Residues 859-871 show a composition bias toward low complexity; the sequence is PSKLETTPTTSPL. A Phosphothreonine modification is found at threonine 865. Residue serine 869 is modified to Phosphoserine. Positions 872–882 are enriched in basic and acidic residues; that stretch reads PERKDHMKEPT. Residues serine 947, serine 949, and serine 1118 each carry the phosphoserine modification. The segment covering 1134 to 1144 has biased composition (basic and acidic residues); that stretch reads PHELPPGDRYG. Disordered regions lie at residues 1134–1158 and 1196–1218; these read PHELPPGDRYGRATYRGGLEGQSSI and QRRPLSARSYSTESYGASQTRPV. At arginine 1149 the chain carries Omega-N-methylarginine. A compositionally biased stretch (polar residues) spans 1196–1217; the sequence is QRRPLSARSYSTESYGASQTRP. Serine 1233 carries the post-translational modification Phosphoserine. Disordered regions lie at residues 1238 to 1265 and 1282 to 1312; these read GNYGDKTSDNSDIKTRPTPVKGEESCGK and RLDRTPSQQSNILDNGQEDVSPSGQWNPYPL. Residues 1243 to 1263 are compositionally biased toward basic and acidic residues; the sequence is KTSDNSDIKTRPTPVKGEESC. The segment covering 1286 to 1307 has biased composition (polar residues); that stretch reads TPSQQSNILDNGQEDVSPSGQW. 2 positions are modified to phosphoserine: serine 1288 and serine 1392. One can recognise a PDZ domain in the interval 1398–1488; that stretch reads EQFCVRIEKN…TVDLVIQREL (91 aa).

The protein belongs to the LAP (LRR and PDZ) protein family. In terms of assembly, interacts with CNKSR2 and DLG4. Interacts with CTNND2/Catenin delta-2. Forms a complex with N-cadherin through CTNND2. Interacts with CAMK2A. As to expression, expressed in brain (at protein level).

The protein localises to the cytoplasm. The protein resides in the postsynaptic density. Required for normal synaptic spine architecture and function. Necessary for DISC1 and GRM5 localization to postsynaptic density complexes and for both N-methyl D-aspartate receptor-dependent and metabotropic glutamate receptor-dependent long term depression. This chain is Leucine-rich repeat-containing protein 7 (Lrrc7), found in Mus musculus (Mouse).